The following is a 377-amino-acid chain: Nitric oxide reductase FlRd-NAD(+) reductase (377 aa).

This sequence belongs to the FAD-dependent oxidoreductase family. FAD serves as cofactor.

It localises to the cytoplasm. The catalysed reaction is 2 reduced [nitric oxide reductase rubredoxin domain] + NAD(+) + H(+) = 2 oxidized [nitric oxide reductase rubredoxin domain] + NADH. It functions in the pathway nitrogen metabolism; nitric oxide reduction. In terms of biological role, one of at least two accessory proteins for anaerobic nitric oxide (NO) reductase. Reduces the rubredoxin moiety of NO reductase. This chain is Nitric oxide reductase FlRd-NAD(+) reductase, found in Salmonella typhimurium (strain LT2 / SGSC1412 / ATCC 700720).